A 231-amino-acid polypeptide reads, in one-letter code: Lipoprotein-releasing system ATP-binding protein LolD (231 aa).

One can recognise an ABC transporter domain in the interval 11–231 (LRLEGLTRRF…TLRDGKLVPF (221 aa)). Residue 47-54 (APSGTGKS) coordinates ATP.

Belongs to the ABC transporter superfamily. Lipoprotein translocase (TC 3.A.1.125) family. In terms of assembly, the complex is composed of two ATP-binding proteins (LolD) and two transmembrane proteins (LolC and LolE).

The protein resides in the cell inner membrane. Part of the ABC transporter complex LolCDE involved in the translocation of mature outer membrane-directed lipoproteins, from the inner membrane to the periplasmic chaperone, LolA. Responsible for the formation of the LolA-lipoprotein complex in an ATP-dependent manner. The chain is Lipoprotein-releasing system ATP-binding protein LolD from Gluconobacter oxydans (strain 621H) (Gluconobacter suboxydans).